We begin with the raw amino-acid sequence, 213 residues long: UPF0502 protein Daro_2469 (213 aa).

It belongs to the UPF0502 family.

This Dechloromonas aromatica (strain RCB) protein is UPF0502 protein Daro_2469.